A 240-amino-acid chain; its full sequence is Glutathione S-transferase theta-1 (240 aa).

Positions 2–82 constitute a GST N-terminal domain; it reads GLELYLDLLS…YLARKYKVPD (81 aa). Glutathione-binding positions include His-40, 53–54, and 66–67; these read KV and ES. Residues 88-226 form the GST C-terminal domain; the sequence is DLQACARVDE…AKDSQPADPT (139 aa).

It belongs to the GST superfamily. Theta family. In terms of assembly, homodimer.

It localises to the cytoplasm. It catalyses the reaction RX + glutathione = an S-substituted glutathione + a halide anion + H(+). Its function is as follows. Conjugation of reduced glutathione to a wide number of exogenous and endogenous hydrophobic electrophiles. Also binds steroids, bilirubin, carcinogens and numerous organic anions. Has dichloromethane dehalogenase activity. This chain is Glutathione S-transferase theta-1 (GSTT1), found in Bos taurus (Bovine).